A 242-amino-acid chain; its full sequence is Segregation and condensation protein A (242 aa).

Belongs to the ScpA family. In terms of assembly, component of a cohesin-like complex composed of ScpA, ScpB and the Smc homodimer, in which ScpA and ScpB bind to the head domain of Smc. The presence of the three proteins is required for the association of the complex with DNA.

It is found in the cytoplasm. Functionally, participates in chromosomal partition during cell division. May act via the formation of a condensin-like complex containing Smc and ScpB that pull DNA away from mid-cell into both cell halves. The sequence is that of Segregation and condensation protein A from Lactococcus lactis subsp. lactis (strain IL1403) (Streptococcus lactis).